The primary structure comprises 128 residues: Ribosome-binding factor A (128 aa).

The protein belongs to the RbfA family. As to quaternary structure, monomer. Binds 30S ribosomal subunits, but not 50S ribosomal subunits or 70S ribosomes.

The protein resides in the cytoplasm. In terms of biological role, one of several proteins that assist in the late maturation steps of the functional core of the 30S ribosomal subunit. Associates with free 30S ribosomal subunits (but not with 30S subunits that are part of 70S ribosomes or polysomes). Required for efficient processing of 16S rRNA. May interact with the 5'-terminal helix region of 16S rRNA. This chain is Ribosome-binding factor A, found in Rippkaea orientalis (strain PCC 8801 / RF-1) (Cyanothece sp. (strain PCC 8801)).